The primary structure comprises 772 residues: PDZ domain-containing protein 4 (772 aa).

Residues 136–221 form the PDZ domain; the sequence is EVELCKNSHQ…NISLLVARPE (86 aa). Residues 239-320 form a disordered region; that stretch reads DFGSENEGDL…TNTPGSLRKF (82 aa). Ser-242 carries the post-translational modification Phosphoserine. Positions 287-303 are enriched in basic and acidic residues; that stretch reads RTDESTRNEESSEHDLL. The stretch at 394 to 424 forms a coiled coil; sequence VNRNESLGHEMAMLEEELRHLEFKCRNILRA. Positions 450 to 573 are disordered; sequence ASEPKKHELS…VGPEGSPYLS (124 aa). Residues 452-472 are compositionally biased toward basic and acidic residues; it reads EPKKHELSDISELPEKSDKDS. Ser-459 carries the post-translational modification Phosphoserine. Polar residues-rich tracts occupy residues 473–484 and 502–511; these read TSAYNTGESCRS and AGNSNLNRTP. The span at 535 to 552 shows a compositional bias: basic and acidic residues; the sequence is LSRDPEVGRRQHTEERVR.

The protein resides in the cytoplasm. Its subcellular location is the cell cortex. The protein is PDZ domain-containing protein 4 (Pdzd4) of Mus musculus (Mouse).